The chain runs to 253 residues: 2,3-bisphosphoglycerate-dependent phosphoglycerate mutase (253 aa).

Substrate-binding positions include 12–19 (RHGESEWN), 25–26 (TG), arginine 64, 91–94 (ERHY), lysine 102, 118–119 (RR), and 187–188 (GN). Catalysis depends on histidine 13, which acts as the Tele-phosphohistidine intermediate. The Proton donor/acceptor role is filled by glutamate 91.

Belongs to the phosphoglycerate mutase family. BPG-dependent PGAM subfamily.

It carries out the reaction (2R)-2-phosphoglycerate = (2R)-3-phosphoglycerate. The protein operates within carbohydrate degradation; glycolysis; pyruvate from D-glyceraldehyde 3-phosphate: step 3/5. Catalyzes the interconversion of 2-phosphoglycerate and 3-phosphoglycerate. This is 2,3-bisphosphoglycerate-dependent phosphoglycerate mutase from Streptomyces griseus subsp. griseus (strain JCM 4626 / CBS 651.72 / NBRC 13350 / KCC S-0626 / ISP 5235).